Here is a 181-residue protein sequence, read N- to C-terminus: Large ribosomal subunit protein uL22 (181 aa).

Residues 157 to 181 (PEAAKKPGKKTSAVEKSKKATAATH) are disordered.

This sequence belongs to the universal ribosomal protein uL22 family.

The polypeptide is Large ribosomal subunit protein uL22 (RpL17) (Biphyllus lunatus (Beetle)).